The chain runs to 265 residues: Polyglutamine-binding protein 1 (265 aa).

The 35-residue stretch at 46–80 (EGLPPSWYKVFDPSCGLPYYWNADTDLVSWLSPHD) folds into the WW domain. S94 is modified (phosphoserine). The disordered stretch occupies residues 94–265 (SSNADAEEKL…AEASRTKQQD (172 aa)). A compositionally biased stretch (basic and acidic residues) spans 99 to 175 (AEEKLDRSHD…DKADREEGKE (77 aa)). 15 consecutive repeat copies span residues 104-110 (DRSHDKS), 111-117 (DRGHDKS), 118-124 (DRSHEKP), 125-131 (DRGHDKS), 132-138 (DRGHDKS), 139-140 (DR), 141-142 (DR), 143-144 (ER), 150-151 (DR), 152-153 (ER), 154-155 (ER), 156-157 (DR), 158-159 (ER), 160-161 (DR), and 162-163 (DR). A 5 X 7 AA approximate tandem repeats of D-R-[SG]-H-D-K-S region spans residues 104–138 (DRSHDKSDRGHDKSDRSHEKPDRGHDKSDRGHDKS). The segment at 139–144 (DRDRER) is 3 X 2 AA tandem repeats of [DE]-R. The segment at 150 to 163 (DRERERDRERDRDR) is 7 X 2 AA tandem repeats of [DE]-R. The tract at residues 245–255 (YPSPGAVLRAN) is important for interaction with TXNL4A. Residue S247 is modified to Phosphoserine.

Interacts with POU3F2/Brn-2, ATXN1, TXNL4A, HTT and AR. Interaction with ATXN1 correlates positively with the length of the polyglutamine tract. Interacts with RNA polymerase II large subunit in a phosphorylation-dependent manner. Forms a ternary complex with ATXN1 mutant and phosphorylated RNA polymerase II. Interacts (via C-terminus) with TXNL4A and CD2BP2. Interacts (via WW domain) with ATN1 and SF3B1, and may interact with additional splice factors. Interacts (via WW domain) with WBP11; Leading to reduce interaction between PQBP1 and TXNL4A. Interacts with CAPRIN1. Interacts with DDX1. Interacts with SFPQ. Interacts with KHSRP.

Its subcellular location is the nucleus. The protein localises to the nucleus speckle. It is found in the cytoplasmic granule. In terms of biological role, intrinsically disordered protein that acts as a scaffold, and which is involved in different processes, such as pre-mRNA splicing, transcription regulation, innate immunity and neuron development. Interacts with splicing-related factors via the intrinsically disordered region and regulates alternative splicing of target pre-mRNA species. May suppress the ability of POU3F2 to transactivate the DRD1 gene in a POU3F2 dependent manner. Can activate transcription directly or via association with the transcription machinery. May be involved in ATXN1 mutant-induced cell death. The interaction with ATXN1 mutant reduces levels of phosphorylated RNA polymerase II large subunit. Involved in the assembly of cytoplasmic stress granule, possibly by participating in the transport of neuronal RNA granules. Also acts as an innate immune sensor of infection by retroviruses, by detecting the presence of reverse-transcribed DNA in the cytosol. Directly binds retroviral reverse-transcribed DNA in the cytosol and interacts with CGAS, leading to activate the cGAS-STING signaling pathway, triggering type-I interferon production. This chain is Polyglutamine-binding protein 1 (PQBP1), found in Pongo pygmaeus (Bornean orangutan).